Here is a 160-residue protein sequence, read N- to C-terminus: uncharacterized protein (160 aa).

The N-acetyltransferase domain occupies 9–151 (LLINYKTLEK…GENPLIWLPE (143 aa)).

This is an uncharacterized protein from Oceanobacillus iheyensis (strain DSM 14371 / CIP 107618 / JCM 11309 / KCTC 3954 / HTE831).